The primary structure comprises 177 residues: UPF0114 protein jhp_0175 (177 aa).

Helical transmembrane passes span 15–35, 54–74, and 145–165; these read WLLA…GYVF, LVLS…VLMV, and PIFW…LTAV.

This sequence belongs to the UPF0114 family.

The protein resides in the cell membrane. This Helicobacter pylori (strain J99 / ATCC 700824) (Campylobacter pylori J99) protein is UPF0114 protein jhp_0175.